A 228-amino-acid chain; its full sequence is Transmembrane protein 186 (228 aa).

Residues 1–93 (MDMMMMSTRL…RGLRALSRLK (93 aa)) lie on the Mitochondrial matrix side of the membrane. The helical transmembrane segment at 94-112 (LLQTGITVVLLPTVYYLHL) threads the bilayer. Residues 113-118 (QGQASV) are Mitochondrial intermembrane-facing. Residues 119 to 141 (LVLNRSIGIALFAGVMLYSISHF) form a helical membrane-spanning segment. Residues 142 to 228 (VRRVVGMMYL…AFGKVFGSLS (87 aa)) are Mitochondrial matrix-facing.

It belongs to the TMEM186 family.

Its subcellular location is the mitochondrion inner membrane. Its function is as follows. May be required for efficient assembly of the mitochondrial complex I. The sequence is that of Transmembrane protein 186 from Danio rerio (Zebrafish).